A 194-amino-acid polypeptide reads, in one-letter code: Lymphocyte antigen 6 complex locus protein G5b (194 aa).

Residues 1–18 (MRACVLVHVLTMVGFALG) form the signal peptide. Residues 26–118 (RTCHLCFLED…SAQHQSTLPG (93 aa)) form the UPAR/Ly6 domain. 5 disulfide bridges follow: cysteine 28–cysteine 55, cysteine 31–cysteine 40, cysteine 47–cysteine 73, cysteine 81–cysteine 98, and cysteine 99–cysteine 104. Asparagine 182 carries N-linked (GlcNAc...) asparagine glycosylation.

In terms of processing, N-glycosylated.

The protein resides in the secreted. This Rattus norvegicus (Rat) protein is Lymphocyte antigen 6 complex locus protein G5b (Ly6g5b).